The chain runs to 103 residues: Heme-copper oxidase subunit 4 (103 aa).

3 helical membrane passes run Val20 to Ala40, Asn42 to Phe62, and Ile75 to Leu95.

The protein resides in the cell membrane. The polypeptide is Heme-copper oxidase subunit 4 (aoxC) (Aeropyrum pernix (strain ATCC 700893 / DSM 11879 / JCM 9820 / NBRC 100138 / K1)).